The primary structure comprises 210 residues: Somatotropin-2 (210 aa).

The N-terminal stretch at 1 to 22 (MARALVLLSVVLVSLLVNQGRA) is a signal peptide. Position 38 (histidine 38) interacts with Zn(2+). Cysteine 71 and cysteine 183 form a disulfide bridge. Glutamate 192 contributes to the Zn(2+) binding site. Cysteine 200 and cysteine 208 form a disulfide bridge.

The protein belongs to the somatotropin/prolactin family.

It is found in the secreted. In terms of biological role, growth hormone plays an important role in growth control and is involved in the regulation of several anabolic processes. Implicated as an osmoregulatory substance important for seawater adaptation. The sequence is that of Somatotropin-2 (gh2) from Carassius auratus (Goldfish).